The following is a 218-amino-acid chain: MNRQKVIAIDGPGASGKGTVAARVAAALGYDYLDTGALYRLTALYAQKQGVGWHDEENVSELAKKLPAVFSGSRILLGGEDVSDGIRTEAIGMGASAVAQLPKVRAALLQRQRDFLTEKGLVADGRDTGSVVFPQAELKIFLTAESKIRAERRAKQIGIPCEGLAFERILSDIEARDEADRNRKVAPLKQQPDALLLDTSRLTIEETVKKVLDWYREV.

11–19 (GPGASGKGT) lines the ATP pocket.

It belongs to the cytidylate kinase family. Type 1 subfamily.

Its subcellular location is the cytoplasm. The enzyme catalyses CMP + ATP = CDP + ADP. It carries out the reaction dCMP + ATP = dCDP + ADP. In Neisseria meningitidis serogroup B (strain ATCC BAA-335 / MC58), this protein is Cytidylate kinase.